The sequence spans 303 residues: RELT-like protein 2 (303 aa).

Residues 15–35 (LYMLFLLVLVFFLMGLVGFMI) form a helical membrane-spanning segment. Disordered stretches follow at residues 46 to 67 (CRTSRGSEPDDAQLQPPEDDDM) and 111 to 303 (SSLQ…AGGV). The residue at position 52 (serine 52) is a Phosphoserine. Basic and acidic residues-rich tracts occupy residues 148 to 158 (RSKEGKSRPRP) and 172 to 188 (THIEKRYGLHEHRDGSP). Positions 194–212 (GSGGGQDPGGGQGPGGGQP) are enriched in gly residues.

It belongs to the RELT family. As to quaternary structure, interacts with RELT, RELL1, OXSR1, PLSCR1 and TRAF2.

It is found in the cell membrane. Its function is as follows. Induces activation of MAPK14/p38 cascade, when overexpressed. Induces apoptosis, when overexpressed. The protein is RELT-like protein 2 (RELL2) of Bos taurus (Bovine).